We begin with the raw amino-acid sequence, 992 residues long: ATP-dependent 6-phosphofructokinase subunit alpha (992 aa).

Residues 1–558 form an N-terminal catalytic PFK domain 1 region; sequence MNNSVYGVAF…LYSNFMSTTV (558 aa). Residues Gly193, 256–257, and 286–289 contribute to the ATP site; these read RS and GDGS. Asp287 serves as a coordination point for Mg(2+). Beta-D-fructose 6-phosphate is bound by residues 332-334, Arg369, 376-378, Glu433, Lys460, and 466-469; these read SID, MGR, and HVQR. Catalysis depends on Asp334, which acts as the Proton acceptor. The interval 559–572 is interdomain linker; the sequence is NDDGSQLLPEADRL. A C-terminal regulatory PFK domain 2 region spans residues 573-992; that stretch reads NIAIVHVGAP…AAKEDSALYV (420 aa). Beta-D-fructose 2,6-bisphosphate contacts are provided by residues Arg643, 700-704, Arg738, 745-747, Glu805, Arg831, 837-840, and Arg929; these read TVSNN, QGG, and HVQQ.

Belongs to the phosphofructokinase type A (PFKA) family. ATP-dependent PFK group I subfamily. Eukaryotic two domain clade 'E' sub-subfamily. Heterooctamer of 4 alpha and 4 beta chains. Mg(2+) is required as a cofactor.

The protein resides in the cytoplasm. The catalysed reaction is beta-D-fructose 6-phosphate + ATP = beta-D-fructose 1,6-bisphosphate + ADP + H(+). Its pathway is carbohydrate degradation; glycolysis; D-glyceraldehyde 3-phosphate and glycerone phosphate from D-glucose: step 3/4. Allosterically activated by ADP, AMP, or fructose 2,6-bisphosphate, and allosterically inhibited by ATP or citrate. Catalyzes the phosphorylation of D-fructose 6-phosphate to fructose 1,6-bisphosphate by ATP, the first committing step of glycolysis. This Kluyveromyces lactis (strain ATCC 8585 / CBS 2359 / DSM 70799 / NBRC 1267 / NRRL Y-1140 / WM37) (Yeast) protein is ATP-dependent 6-phosphofructokinase subunit alpha (PFK1).